A 109-amino-acid polypeptide reads, in one-letter code: MRVNAQHKNARISAQKARLVADLIRGKDVAQALNILAFSPKKGAELIKKVLESAIANAEHNNGADIDELKVVTIFVDKGPSLKRFQARAKGRGNRIEKQTCHINVTVGN.

This sequence belongs to the universal ribosomal protein uL22 family. In terms of assembly, part of the 50S ribosomal subunit.

Its function is as follows. This protein binds specifically to 23S rRNA; its binding is stimulated by other ribosomal proteins, e.g. L4, L17, and L20. It is important during the early stages of 50S assembly. It makes multiple contacts with different domains of the 23S rRNA in the assembled 50S subunit and ribosome. In terms of biological role, the globular domain of the protein is located near the polypeptide exit tunnel on the outside of the subunit, while an extended beta-hairpin is found that lines the wall of the exit tunnel in the center of the 70S ribosome. In Neisseria gonorrhoeae (strain ATCC 700825 / FA 1090), this protein is Large ribosomal subunit protein uL22.